Consider the following 349-residue polypeptide: Anthranilate phosphoribosyltransferase (349 aa).

Residues Gly82, 85 to 86, 92 to 95, 110 to 118, and Ser122 each bind 5-phospho-alpha-D-ribose 1-diphosphate; these read GD, NVST, and KHGNRAVSG. Gly82 is an anthranilate binding site. Ser94 provides a ligand contact to Mg(2+). Asn113 serves as a coordination point for anthranilate. Arg168 is an anthranilate binding site. Mg(2+) is bound by residues Asp227 and Glu228.

Belongs to the anthranilate phosphoribosyltransferase family. As to quaternary structure, homodimer. It depends on Mg(2+) as a cofactor.

The catalysed reaction is N-(5-phospho-beta-D-ribosyl)anthranilate + diphosphate = 5-phospho-alpha-D-ribose 1-diphosphate + anthranilate. It participates in amino-acid biosynthesis; L-tryptophan biosynthesis; L-tryptophan from chorismate: step 2/5. Functionally, catalyzes the transfer of the phosphoribosyl group of 5-phosphorylribose-1-pyrophosphate (PRPP) to anthranilate to yield N-(5'-phosphoribosyl)-anthranilate (PRA). This Pseudomonas putida (strain ATCC 700007 / DSM 6899 / JCM 31910 / BCRC 17059 / LMG 24140 / F1) protein is Anthranilate phosphoribosyltransferase.